The chain runs to 139 residues: MGDITRFGISIDSDLLDSFDRLITRKGYQNRSEAIRDLIRATIVEEKMDAGHEEMVGTVTMVYNHHVRDLADKLTEHQHQHHHQVISALHVHLDAHNCLEVLVLKGSSAEIKQIADELLGVKGVKHGKLFLTSATPEHH.

Ni(2+) is bound by residues H79, H90, H92, and C98.

This sequence belongs to the transcriptional regulatory CopG/NikR family. Ni(2+) is required as a cofactor.

In terms of biological role, transcriptional regulator. This is Putative nickel-responsive regulator from Trichlorobacter lovleyi (strain ATCC BAA-1151 / DSM 17278 / SZ) (Geobacter lovleyi).